The following is a 160-amino-acid chain: uncharacterized protein (160 aa).

Residues Ile-5–Leu-160 form the N-acetyltransferase domain.

This is an uncharacterized protein from Bacillus subtilis (strain 168).